We begin with the raw amino-acid sequence, 264 residues long: MKQYKELCRHVLQHGDEKGDRTGTGTISTFGYQMRFDLQEGFPLLTTKKLHLKSIIHELLWFLKGDTNVKYLQENGVRIWNEWADENGELGRVYGAQWRSWASGDGETVDQITKLIHDIEHNPNSRRLIVSAWNPGEIDQMALPPCHCLFQFYVSNGKLSCQLYQRSADIFLGVPFNIASYALLTMMIAKVTNLEPGEFVHTLGDAHIYQNHLPQVNMQLEREERALPQLRITRDVKSIFDFTFDDFVLENYDPHPHIKGEVSV.

Arg21 contributes to the dUMP binding site. His51 is a (6R)-5,10-methylene-5,6,7,8-tetrahydrofolate binding site. 126 to 127 (RR) lines the dUMP pocket. Cys146 acts as the Nucleophile in catalysis. DUMP contacts are provided by residues 166–169 (RSAD), Asn177, and 207–209 (HIY). Position 169 (Asp169) interacts with (6R)-5,10-methylene-5,6,7,8-tetrahydrofolate. Ser263 provides a ligand contact to (6R)-5,10-methylene-5,6,7,8-tetrahydrofolate.

Belongs to the thymidylate synthase family. Bacterial-type ThyA subfamily. In terms of assembly, homodimer.

The protein resides in the cytoplasm. It carries out the reaction dUMP + (6R)-5,10-methylene-5,6,7,8-tetrahydrofolate = 7,8-dihydrofolate + dTMP. It participates in pyrimidine metabolism; dTTP biosynthesis. Catalyzes the reductive methylation of 2'-deoxyuridine-5'-monophosphate (dUMP) to 2'-deoxythymidine-5'-monophosphate (dTMP) while utilizing 5,10-methylenetetrahydrofolate (mTHF) as the methyl donor and reductant in the reaction, yielding dihydrofolate (DHF) as a by-product. This enzymatic reaction provides an intracellular de novo source of dTMP, an essential precursor for DNA biosynthesis. This is Thymidylate synthase from Bacillus pumilus (strain SAFR-032).